Here is a 385-residue protein sequence, read N- to C-terminus: WD repeat-containing protein 74 (385 aa).

WD repeat units follow at residues 40-80, 83-122, 128-168, 179-220, 224-266, and 267-306; these read RREE…FQGQ, CPGG…TSSD, RVGP…EPVF, DLRV…RRPV, TYGE…GCLK, and GLAG…GLEH. Ser214 is subject to Phosphoserine. Lys311 carries the post-translational modification N6-methyllysine. The required for nucleolar and nuclear location stretch occupies residues 320 to 385; that stretch reads SGRDNWEDEP…KKKRPGSTSP (66 aa). 2 disordered regions span residues 323 to 345 and 360 to 385; these read DNWE…DTET and LSGL…STSP. A Phosphoserine modification is found at Ser361. Basic residues predominate over residues 372 to 385; the sequence is TRRRKKKRPGSTSP.

In terms of assembly, isoform 1 interacts (through WDR repeats) with NVL; the interaction is independent of RNA or pre-60S ribosome particles. Isoform 2 does not interact with NVL. Interacts with MTREX; the interaction dissociation in a late stage of rRNA synthesis is required for appropriate maturation of pre-60S particles and depends on the ATPase activity of NVL.

Its subcellular location is the nucleus. The protein resides in the nucleolus. Regulatory protein of the MTREX-exosome complex involved in the synthesis of the 60S ribosomal subunit. Participates in an early cleavage of the pre-rRNA processing pathway in cooperation with NVL. Required for blastocyst formation, is necessary for RNA transcription, processing and/or stability during preimplantation development. The polypeptide is WD repeat-containing protein 74 (WDR74) (Homo sapiens (Human)).